A 351-amino-acid polypeptide reads, in one-letter code: Flap endonuclease 1 (351 aa).

An N-domain region spans residues 1-98; the sequence is MDLAELVEEI…QELERRKKVK (98 aa). Mg(2+) contacts are provided by aspartate 27, aspartate 80, glutamate 154, glutamate 156, aspartate 175, aspartate 177, and aspartate 238. The interval 118–260 is I-domain; sequence ELKKYAQMSI…TAYRIIKKYG (143 aa). The interaction with PCNA stretch occupies residues 343 to 351; sequence RQTGLDQWF.

This sequence belongs to the XPG/RAD2 endonuclease family. FEN1 subfamily. Interacts with PCNA. PCNA stimulates the nuclease activity without altering cleavage specificity. It depends on Mg(2+) as a cofactor.

Its function is as follows. Structure-specific nuclease with 5'-flap endonuclease and 5'-3' exonuclease activities involved in DNA replication and repair. During DNA replication, cleaves the 5'-overhanging flap structure that is generated by displacement synthesis when DNA polymerase encounters the 5'-end of a downstream Okazaki fragment. Binds the unpaired 3'-DNA end and kinks the DNA to facilitate 5' cleavage specificity. Cleaves one nucleotide into the double-stranded DNA from the junction in flap DNA, leaving a nick for ligation. Also involved in the base excision repair (BER) pathway. Acts as a genome stabilization factor that prevents flaps from equilibrating into structures that lead to duplications and deletions. Also possesses 5'-3' exonuclease activity on nicked or gapped double-stranded DNA. This chain is Flap endonuclease 1, found in Sulfurisphaera tokodaii (strain DSM 16993 / JCM 10545 / NBRC 100140 / 7) (Sulfolobus tokodaii).